A 500-amino-acid chain; its full sequence is Na(+)/H(+) antiporter NhaB (500 aa).

A run of 13 helical transmembrane segments spans residues 11-31 (HGFL…FLVL), 34-54 (LLLA…EFIF), 58-78 (MALK…ALLL), 96-116 (VILL…LLLF), 121-141 (ILLG…LSAF), 145-165 (FLDA…FYAV), 205-225 (LLMH…VGEP), 241-261 (FLLK…LTCV), 311-331 (ILII…LMVI), 350-370 (FQDA…VAVI), 394-414 (MLYL…VATI), 450-470 (ATPN…APLI), and 477-497 (MVWM…WAVT).

The protein belongs to the NhaB Na(+)/H(+) (TC 2.A.34) antiporter family.

Its subcellular location is the cell inner membrane. It carries out the reaction 2 Na(+)(in) + 3 H(+)(out) = 2 Na(+)(out) + 3 H(+)(in). Functionally, na(+)/H(+) antiporter that extrudes sodium in exchange for external protons. The polypeptide is Na(+)/H(+) antiporter NhaB (Pseudomonas putida (strain ATCC 700007 / DSM 6899 / JCM 31910 / BCRC 17059 / LMG 24140 / F1)).